Reading from the N-terminus, the 141-residue chain is Large ribosomal subunit protein uL11 (141 aa).

It belongs to the universal ribosomal protein uL11 family. In terms of assembly, part of the ribosomal stalk of the 50S ribosomal subunit. Interacts with L10 and the large rRNA to form the base of the stalk. L10 forms an elongated spine to which L12 dimers bind in a sequential fashion forming a multimeric L10(L12)X complex. In terms of processing, one or more lysine residues are methylated.

In terms of biological role, forms part of the ribosomal stalk which helps the ribosome interact with GTP-bound translation factors. This Streptococcus pneumoniae serotype 2 (strain D39 / NCTC 7466) protein is Large ribosomal subunit protein uL11.